The sequence spans 141 residues: Cell division protein SepF (141 aa).

It belongs to the SepF family. In terms of assembly, homodimer. Interacts with FtsZ.

It is found in the cytoplasm. Functionally, cell division protein that is part of the divisome complex and is recruited early to the Z-ring. Probably stimulates Z-ring formation, perhaps through the cross-linking of FtsZ protofilaments. Its function overlaps with FtsA. This chain is Cell division protein SepF, found in Anoxybacillus flavithermus (strain DSM 21510 / WK1).